Here is a 316-residue protein sequence, read N- to C-terminus: Phosphatidylinositol mannoside acyltransferase (316 aa).

Catalysis depends on His137, which acts as the Proton acceptor. Residues His137 and Arg175 each contribute to the hexadecanoyl-CoA site. Glu211 is a catalytic residue. Hexadecanoyl-CoA is bound at residue Glu240.

Belongs to the LpxL/LpxM/LpxP family.

The protein localises to the cell inner membrane. The catalysed reaction is a 2,6-O-bis(alpha-D-mannopyranosyl)-1-phosphatidyl-1D-myo-inositol + an acyl-CoA = a 2-O-(alpha-D-mannosyl)-6-O-(6-O-acyl-alpha-D-mannosyl)-1-phosphatidyl-1D-myo-inositol + CoA. It carries out the reaction a 1,2-diacyl-sn-glycero-3-phospho-[alpha-D-mannopyranosyl-(1&lt;-&gt;6)-D-myo-inositol] + an acyl-CoA = a 1,2-diacyl-sn-glycero-3-phospho-[alpha-D-6-acyl-mannopyranosyl-(1&lt;-&gt;6)-D-myo-inositol] + CoA. It functions in the pathway phospholipid metabolism; phosphatidylinositol metabolism. Catalyzes the transfer of a palmitoyl moiety from palmitoyl-CoA to the 6-position of the mannose ring linked to the 2-position of myo-inositol in phosphatidyl-myo-inositol monomannoside (PIM1) or dimannoside (PIM2). Essential for growth and survival in axenic cultures and during macrophage infection and in a mouse model of infection. The polypeptide is Phosphatidylinositol mannoside acyltransferase (Mycobacterium tuberculosis (strain ATCC 25618 / H37Rv)).